The primary structure comprises 292 residues: Probable xyloglucan endotransglucosylase/hydrolase protein 6 (292 aa).

A signal peptide spans 1–30 (MAKIYSPSFPGTLCLCIFTLLTLMFIRVSA). A GH16 domain is found at 31 to 224 (RPATFVEDFK…WSKAPFYAYY (194 aa)). The Nucleophile role is filled by Glu110. The Proton donor role is filled by Glu114. Glu114 lines the xyloglucan pocket. Asn118 is a glycosylation site (N-linked (GlcNAc...) asparagine). Residues 127–129 (QTN), 137–139 (DRE), 203–204 (DW), and Gly208 contribute to the xyloglucan site. Cystine bridges form between Cys232-Cys240 and Cys277-Cys290. Arg282 is a xyloglucan binding site.

The protein belongs to the glycosyl hydrolase 16 family. XTH group 1 subfamily. Contains at least one intrachain disulfide bond essential for its enzymatic activity.

It localises to the secreted. Its subcellular location is the cell wall. It is found in the extracellular space. The protein localises to the apoplast. The enzyme catalyses breaks a beta-(1-&gt;4) bond in the backbone of a xyloglucan and transfers the xyloglucanyl segment on to O-4 of the non-reducing terminal glucose residue of an acceptor, which can be a xyloglucan or an oligosaccharide of xyloglucan.. Catalyzes xyloglucan endohydrolysis (XEH) and/or endotransglycosylation (XET). Cleaves and religates xyloglucan polymers, an essential constituent of the primary cell wall, and thereby participates in cell wall construction of growing tissues. In Arabidopsis thaliana (Mouse-ear cress), this protein is Probable xyloglucan endotransglucosylase/hydrolase protein 6 (XTH6).